Here is a 206-residue protein sequence, read N- to C-terminus: Ribonuclease HII (206 aa).

The region spanning 27–206 is the RNase H type-2 domain; it reads ARIAGVDEAG…CALHRRSFKH (180 aa). A divalent metal cation contacts are provided by aspartate 33, glutamate 34, and aspartate 125.

The protein belongs to the RNase HII family. Requires Mn(2+) as cofactor. Mg(2+) serves as cofactor.

The protein resides in the cytoplasm. The enzyme catalyses Endonucleolytic cleavage to 5'-phosphomonoester.. Functionally, endonuclease that specifically degrades the RNA of RNA-DNA hybrids. The sequence is that of Ribonuclease HII from Moorella thermoacetica (strain ATCC 39073 / JCM 9320).